A 411-amino-acid chain; its full sequence is Immunity-related GTPase family M protein (411 aa).

A disordered region spans residues 1–21 (MKPSHKSCEAAPLLPKMPETS). The IRG-type G domain occupies 77-253 (IPVSIFVTGD…PELRNTLQTD (177 aa)). GTP-binding positions include 86–93 (DSGNGMSS), 111–115 (TGVVR), and 193–195 (KLD). Ser204 is modified (phosphoserine). 234–236 (SNL) contributes to the GTP binding site. Residue Lys272 forms a Glycyl lysine isopeptide (Lys-Gly) (interchain with G-Cter in ubiquitin) linkage. Residues 352–376 (KLRLMTCTTVNALFCLFKFLPCLCH) are alpha-K amphipathic helix.

It belongs to the TRAFAC class dynamin-like GTPase superfamily. IRG family. In terms of assembly, interacts with ULK1; promoting the coassembly of ULK1 and BECN1. Interacts with BECN1; enhancing BECN1-interacting partners and influencing the composition of the BECN1 complex. Interacts with ATG16L1. Interacts with NOD2; promoting Irgm 'Lys-63'-linked polyubiquitination, which is required for interactions with the core autophagy factors. Interacts with STX17; promoting STX17 recruitment to autophagosomes. Interacts with ATG8 proteins (GABARAP, GABARAPL1, GABARAPL2, MAP1LC3A, MAP1LC3B and MAP1LC3C); promoting STX17 recruitment to autophagosomes. Interacts with TFEB; promoting association between TFEB and PPP3CB and TFEB dephosphorylation. Interacts with PPP3CB; promoting association between TFEB and PPP3CB and TFEB dephosphorylation. Interacts with NLRP3; preventing NLRP3 inflammasome assembly and promoting SQSTM1/p62-dependent autophagic degradation of NLRP3. Interacts with CGAS; promoting SQSTM1/p62-dependent autophagic degradation of CGAS. Interacts with RIGI/RIG-I; promoting SQSTM1/p62-dependent autophagic degradation of RIGI/RIG-I. Interacts with NOD1; promoting SQSTM1/p62-dependent autophagic degradation of RIGI/RIG-I. Interacts with NOD2; promoting SQSTM1/p62-dependent autophagic degradation of RIGI/RIG-I. Interacts with RIPK2; promoting SQSTM1/p62-dependent autophagic degradation of RIGI/RIG-I. Interacts with PIK3CA. Palmitoylated on C-terminal Cys residues. Palmitoylation, together with the alpha-K amphipathic helix, which binds phosphatidylinositol, mediate binding to membranes. In terms of processing, ubiquitinated via 'Lys-63'-linked polyubiquitination in a NOD2-dependent process. 'Lys-63'-linked polyubiquitination is required for interactions with the core autophagy factors. Ubiquitination at Lys-272 by the DCX(WDR77) complex, also named CLR4(WDR77) complex, in intestinal cells, leading to its degradation by the proteasome.

It localises to the golgi apparatus membrane. The protein localises to the cell membrane. Its subcellular location is the cytoplasmic vesicle. It is found in the phagosome membrane. The protein resides in the autophagosome membrane. It localises to the lysosome membrane. The protein localises to the late endosome membrane. Its subcellular location is the mitochondrion membrane. It is found in the cell projection. The protein resides in the phagocytic cup. The enzyme catalyses GTP + H2O = GDP + phosphate + H(+). Functionally, immunity-related GTPase that plays important roles in innate immunity and inflammatory response. Acts as a dynamin-like protein that binds to intracellular membranes and promotes remodeling and trafficking of those membranes. Required for clearance of acute protozoan and bacterial infections by interacting with autophagy and lysosome regulatory proteins, thereby promoting the fusion of phagosomes with lysosomes for efficient degradation of cargo including microbes. Regulates selective autophagy, including xenophagy and mitophagy, both directly and indirectly. Directly regulates autophagy by acting as a molecular adapter that promotes the coassembly of the core autophagy machinery to mediate antimicrobial defense: Irgm (1) activates AMPK, which in turn phosphorylates ULK1 and BECN1 to induce autophagy, (2) promotes the coassembly of ULK1 and BECN1, enhancing BECN1-interacting partners and (3) influences the composition of the BECN1 complex, by competing with the negative regulators BCL2 and RUBCN, to trigger autophagy. Also activates autophagy by promoting recruitment of STX17 to autophagosomes. In collaboration with ATG8 proteins, regulate lysosomal biogenesis, a fundamental process for any autophagic pathway, by promoting TFEB dephosphorylation. Also modulates autophagy by assisting with autophagosome formation and preventing lysosomal deacidification. Regulates autophagy by affecting mitochondrial fusion and fission. Also involved in M1 macrophage activation for the production of proinflammatory cytokines. While activating autophagy, acts as a key negative regulator of the inflammatory and interferon responses both by (1) promoting mitophagy and (2) mediating autophagy-dependent degradation of effectors of the inflammatory response. Promotes degradation of damaged and IFNG/IFN-gamma-stressed mitochondria via mitophagy, preventing cytosolic release of ligands that activate inflammation. Negatively regulates interferon-signaling in hematopoietic stem cells, preserving hematopoietic stem cell number and function. Promotes expansion of activated CD4(+) T-cells by inhibiting IFNG/IFN-gamma signaling, thereby preventing Ifng-mediated cell death of CD4(+) T-cells. Acts as a suppressor of inflammation by promoting recruitment of inflammation effectors, such as CGAS, RIGI/RIG-I and NLRP3, to autophagosome membranes, leading to their SQSTM1/p62-dependent autophagic degradation. Also directly inhibits assembly of the NLRP3 inflammasome by preventing the association between NLRP3 and PYCARD. Acts as a negative regulator of antiviral innate immune response by suppressing the RIPK2-dependent pro-inflammatory response: mediates recruitment of RIPosomes, composed of RIPK2 and NOD1 or NOD2, to autophagosome membranes, promoting their SQSTM1/p62-dependent autophagic degradation. The sequence is that of Immunity-related GTPase family M protein from Rattus norvegicus (Rat).